Here is a 169-residue protein sequence, read N- to C-terminus: Peptide deformylase (169 aa).

Residues cysteine 91 and histidine 133 each contribute to the Fe cation site. The active site involves glutamate 134. A Fe cation-binding site is contributed by histidine 137.

It belongs to the polypeptide deformylase family. Fe(2+) is required as a cofactor.

It carries out the reaction N-terminal N-formyl-L-methionyl-[peptide] + H2O = N-terminal L-methionyl-[peptide] + formate. Functionally, removes the formyl group from the N-terminal Met of newly synthesized proteins. Requires at least a dipeptide for an efficient rate of reaction. N-terminal L-methionine is a prerequisite for activity but the enzyme has broad specificity at other positions. The sequence is that of Peptide deformylase from Aliivibrio salmonicida (strain LFI1238) (Vibrio salmonicida (strain LFI1238)).